Reading from the N-terminus, the 476-residue chain is Chromosomal replication initiator protein DnaA (476 aa).

The domain I, interacts with DnaA modulators stretch occupies residues 1–73; sequence MTNSEQERWS…LSAWQAEMPE (73 aa). The segment at 73–132 is domain II; it reads EVHRIDLSVRTAMRCATPAKEAPAAVEARRPERSDAKPVSDARAPVMTPVAASHDALGGS. The segment at 92–115 is disordered; that stretch reads KEAPAAVEARRPERSDAKPVSDAR. Positions 99–112 are enriched in basic and acidic residues; it reads EARRPERSDAKPVS. Positions 133 to 355 are domain III, AAA+ region; the sequence is PLDPRLTFAS…GAINRLLAHS (223 aa). 4 residues coordinate ATP: G180, G182, K183, and T184. Positions 356 to 476 are domain IV, binds dsDNA; sequence KLNNQPVTLD…VESLKRQLQD (121 aa).

This sequence belongs to the DnaA family. As to quaternary structure, oligomerizes as a right-handed, spiral filament on DNA at oriC.

It localises to the cytoplasm. Plays an essential role in the initiation and regulation of chromosomal replication. ATP-DnaA binds to the origin of replication (oriC) to initiate formation of the DNA replication initiation complex once per cell cycle. Binds the DnaA box (a 9 base pair repeat at the origin) and separates the double-stranded (ds)DNA. Forms a right-handed helical filament on oriC DNA; dsDNA binds to the exterior of the filament while single-stranded (ss)DNA is stabiized in the filament's interior. The ATP-DnaA-oriC complex binds and stabilizes one strand of the AT-rich DNA unwinding element (DUE), permitting loading of DNA polymerase. After initiation quickly degrades to an ADP-DnaA complex that is not apt for DNA replication. Binds acidic phospholipids. The chain is Chromosomal replication initiator protein DnaA from Bradyrhizobium sp. (strain ORS 278).